The sequence spans 210 residues: NADH dehydrogenase [ubiquinone] iron-sulfur protein 8, mitochondrial (210 aa).

Residues 1 to 34 (MRCLTTPVLLRALAQAARAGPPGGRSLHSSAVAA) constitute a mitochondrion transit peptide. 2 consecutive 4Fe-4S ferredoxin-type domains span residues 102–131 (RRYP…IEAE) and 141–170 (TRYD…EGPN). Residues Cys111, Cys114, Cys117, Cys121, Cys150, Cys153, Cys156, and Cys160 each contribute to the [4Fe-4S] cluster site.

The protein belongs to the complex I 23 kDa subunit family. In terms of assembly, core subunit of respiratory chain NADH dehydrogenase (Complex I) which is composed of 45 different subunits. This is a component of the iron-sulfur (IP) fragment of the enzyme. Interacts with RAB5IF. [4Fe-4S] cluster is required as a cofactor.

It is found in the mitochondrion inner membrane. It catalyses the reaction a ubiquinone + NADH + 5 H(+)(in) = a ubiquinol + NAD(+) + 4 H(+)(out). In terms of biological role, core subunit of the mitochondrial membrane respiratory chain NADH dehydrogenase (Complex I) which catalyzes electron transfer from NADH through the respiratory chain, using ubiquinone as an electron acceptor. Essential for the catalytic activity and assembly of complex I. The polypeptide is NADH dehydrogenase [ubiquinone] iron-sulfur protein 8, mitochondrial (NDUFS8) (Gorilla gorilla gorilla (Western lowland gorilla)).